The sequence spans 143 residues: D-aminoacyl-tRNA deacylase (143 aa).

The short motif at 135–136 (GP) is the Gly-cisPro motif, important for rejection of L-amino acids element.

Belongs to the DTD family. In terms of assembly, homodimer.

It localises to the cytoplasm. It catalyses the reaction glycyl-tRNA(Ala) + H2O = tRNA(Ala) + glycine + H(+). It carries out the reaction a D-aminoacyl-tRNA + H2O = a tRNA + a D-alpha-amino acid + H(+). Its function is as follows. An aminoacyl-tRNA editing enzyme that deacylates mischarged D-aminoacyl-tRNAs. Also deacylates mischarged glycyl-tRNA(Ala), protecting cells against glycine mischarging by AlaRS. Acts via tRNA-based rather than protein-based catalysis; rejects L-amino acids rather than detecting D-amino acids in the active site. By recycling D-aminoacyl-tRNA to D-amino acids and free tRNA molecules, this enzyme counteracts the toxicity associated with the formation of D-aminoacyl-tRNA entities in vivo and helps enforce protein L-homochirality. The polypeptide is D-aminoacyl-tRNA deacylase (Mycobacterium marinum (strain ATCC BAA-535 / M)).